Consider the following 340-residue polypeptide: Arginase 1, mitochondrial (340 aa).

The transit peptide at 1–24 directs the protein to the mitochondrion; sequence MGGVAAGTRWIHHVRRLSAAKVST. Mn(2+) contacts are provided by H159, D183, H185, and D187. Substrate is bound by residues 185-189 and 193-195; these read HPDIY and EGN. Positions 268 and 270 each coordinate Mn(2+). Residue E311 participates in substrate binding.

It belongs to the arginase family. Mn(2+) serves as cofactor.

Its subcellular location is the mitochondrion. It catalyses the reaction L-arginine + H2O = urea + L-ornithine. Its pathway is nitrogen metabolism; urea cycle; L-ornithine and urea from L-arginine: step 1/1. Catalyzes the hydrolysis of L-arginine to urea and L-ornithine. The latter can be utilized in the urea cycle or as a precursor for the synthesis of both polyamines and proline. The sequence is that of Arginase 1, mitochondrial from Oryza sativa subsp. indica (Rice).